Consider the following 660-residue polypeptide: Iron(3+)-hydroxamate import system permease protein FhuB (660 aa).

Transmembrane regions (helical) follow at residues 5–25 (IALF…ALTW), 62–82 (LAIS…FQQV), 93–113 (LGVA…AIPG), 118–138 (QFAA…VAWG), 147–167 (ILAG…LVIF), 197–217 (QLLG…LMGL), 240–260 (AIVI…IGLF), 277–297 (LMLA…IILW), 303–323 (MEVS…LWLL), 348–368 (LAFA…ALSF), 391–411 (WPRI…GCII), 424–444 (VLGI…LVPG), 447–467 (FGWL…IIMI), 479–499 (MLLA…MLQA), 528–548 (GIVM…LTIL), 567–587 (IALL…IGPL), 607–627 (MPHI…ADWC), and 635–655 (FQIP…IYLL).

Belongs to the binding-protein-dependent transport system permease family. FecCD subfamily. The complex is composed of two ATP-binding proteins (FhuC), a transmembrane protein (FhuB) and a solute-binding protein (FhuD). FhuB interacts with FhuC. FhuB interacts with FhuD. FhuB binds substrate-loaded FhuD more strongly than FhuD alone.

The protein resides in the cell inner membrane. Part of the ABC transporter complex FhuCDB involved in iron(3+)-hydroxamate import. Responsible for the translocation of the substrate across the membrane. The chain is Iron(3+)-hydroxamate import system permease protein FhuB (fhuB) from Escherichia coli (strain K12).